The primary structure comprises 1217 residues: MFLYNLTLQRATGISFAIHGNFSGTKQQEIVVSRGKILELLRPDPNTGKVHTLLTVEVFGVIRSLMAFRLTGGTKDYIVVGSDSGRIVILEYQPSKNMFEKIHQETFGKSGCRRIVPGQFLAVDPKGRAVMISAIEKQKLVYILNRDAAARLTISSPLEAHKANTLVYHVVGVDVGFENPMFACLEMDYEEADNDPTGEAAANTQQTLTFYELDLGLNHVVRKYSEPLEEHGNFLITVPGGSDGPSGVLICSENYITYKNFGDQPDIRCPIPRRRNDLDDPERGMIFVCSATHKTKSMFFFLAQTEQGDIFKITLETDEDMVTEIRLKYFDTVPVAAAMCVLKTGFLFVASEFGNHYLYQIAHLGDDDEEPEFSSAMPLEEGDTFFFQPRPLKNLVLVDELDSLSPILFCQIADLANEDTPQLYVACGRGPRSSLRVLRHGLEVSEMAVSELPGNPNAVWTVRRHIEDEFDAYIIVSFVNATLVLSIGETVEEVTDSGFLGTTPTLSCSLLGDDALVQVYPDGIRHIRADKRVNEWKTPGKKTIVKCAVNQRQVVIALTGGELVYFEMDPSGQLNEYTERKEMSADVVCMSLANVPPGEQRSRFLAVGLVDNTVRIISLDPSDCLQPLSMQALPAQPESLCIVEMGGTEKQDELGERGSIGFLYLNIGLQNGVLLRTVLDPVTGDLSDTRTRYLGSRPVKLFRVRMQGQEAVLAMSSRSWLSYSYQSRFHLTPLSYETLEFASGFASEQCPEGIVAISTNTLRILALEKLGAVFNQVAFPLQYTPRKFVIHPESNNLIIIETDHNAYTEATKAQRKQQMAEEMVEAAGEDERELAAEMAAAFLNENLPESIFGAPKAGNGQWASVIRVMNPIQGNTLDLVQLEQNEAAFSVAVCRFSNTGEDWYVLVGVAKDLILSPRSVAGGFVYTYKLVNNGEKLEFLHKTPVEEVPAAIAPFQGRVLIGVGKLLRVYDLGKKKLLRKCENKHIANYISGIQTIGHRVIVSDVQESFIWVRYKRNENQLIIFADDTYPRWVTTASLLDYDTVAGADKFGNICVVRLPPNTNDEVDEDPTGNKALWDRGLLNGASQKAEVIMNYHVGETVLSLQKTTLIPGGSESLVYTTLSGGIGILVPFTSHEDHDFFQHVEMHLRSEHPPLCGRDHLSFRSYYFPVKNVIDGDLCEQFNSMEPNKQKNVSEELDRTPPEVSKKLEDIRTRYAF.

Interaction with PHF5A, SF3B1 and SF3B5 regions lie at residues 105–119 and 145–168; these read ETFGKSGCRRIVPGQ and NRDAAARLTISSPLEAHKANTLVY. Residue serine 156 is modified to Phosphoserine. Interaction with SF3B1 and SF3B5 stretches follow at residues 193–231 and 786–804; these read DNDPTGEAAANTQQTLTFYELDLGLNHVVRKYSEPLEEH and RKFVIHPESNNLIIIETDH. An interaction with SF3B1 region spans residues 1028–1049; that stretch reads TYPRWVTTASLLDYDTVAGADK. Residues 1100–1123 form an interaction with SF3B5 region; that stretch reads TVLSLQKTTLIPGGSESLVYTTLS. Threonine 1200 carries the phosphothreonine modification.

It belongs to the RSE1 family. In terms of assembly, component of the 17S U2 SnRNP complex, a ribonucleoprotein complex that contains small nuclear RNA (snRNA) U2 and a number of specific proteins. Part of the SF3B subcomplex of the 17S U2 SnRNP complex. SF3B associates with the splicing subcomplex SF3A and a 12S RNA unit to form the U2 small nuclear ribonucleoproteins complex (U2 snRNP). Within the SF3B subcomplex, interacts directly with SF3B1 (via HEAT domain), SF3B5 and PHF5A. Identified in the spliceosome A complex; remains associated with the spliceosome throughout the splicing process. Component of the spliceosome B complex. Identified in the spliceosome C complex. Identified in the spliceosome E complex. Component of the minor (U12-type spliceosome) spliceosome. Within this complex, interacts with SCNM1. Associates with the STAGA transcription coactivator-HAT complex. Interacts with SUPT3H. Interacts with TAF3.

The protein resides in the nucleus. In terms of biological role, component of the 17S U2 SnRNP complex of the spliceosome, a large ribonucleoprotein complex that removes introns from transcribed pre-mRNAs. The 17S U2 SnRNP complex (1) directly participates in early spliceosome assembly and (2) mediates recognition of the intron branch site during pre-mRNA splicing by promoting the selection of the pre-mRNA branch-site adenosine, the nucleophile for the first step of splicing. Within the 17S U2 SnRNP complex, SF3B3 is part of the SF3B subcomplex, which is required for 'A' complex assembly formed by the stable binding of U2 snRNP to the branchpoint sequence in pre-mRNA. Sequence independent binding of SF3A and SF3B subcomplexes upstream of the branch site is essential, it may anchor U2 snRNP to the pre-mRNA. May also be involved in the assembly of the 'E' complex. Also acts as a component of the minor spliceosome, which is involved in the splicing of U12-type introns in pre-mRNAs. This is Splicing factor 3B subunit 3 (Sf3b3) from Mus musculus (Mouse).